A 293-amino-acid polypeptide reads, in one-letter code: Putative ribose uptake protein RbsU (293 aa).

Helical transmembrane passes span 2 to 24, 34 to 56, 63 to 80, 95 to 117, 122 to 139, 154 to 171, 180 to 202, 212 to 234, 241 to 263, and 273 to 292; these read SIVALLIGLGPLIGWGFFPTVAS, IIGATVGTLIFAIILAVVTSSGF, LFALLSGAGWGFGQIITF, TTAFQLLGASLWGVFALGNWPGI, IGFTALVVILIGARMTVW, AVVLLLIGEFGYWLYSAA, LTAFLPQAMGMVIVAVIYGFMNM, ITWLQIISGFFFAFGALTYLISA, LATGFILSQTSVVLATLTGIYFL, and VITIIGLVLILVAASVTVFI.

The protein belongs to the GRP transporter (TC 2.A.7.5) family.

The protein resides in the cell membrane. Could be involved in the uptake of ribose. This Staphylococcus aureus (strain Mu50 / ATCC 700699) protein is Putative ribose uptake protein RbsU (rbsU).